The chain runs to 1404 residues: DNA-directed RNA polymerase subunit beta' (1404 aa).

4 residues coordinate Zn(2+): C70, C72, C85, and C88. 3 residues coordinate Mg(2+): D460, D462, and D464. The Zn(2+) site is built by C814, C889, C896, and C899.

This sequence belongs to the RNA polymerase beta' chain family. As to quaternary structure, the RNAP catalytic core consists of 2 alpha, 1 beta, 1 beta' and 1 omega subunit. When a sigma factor is associated with the core the holoenzyme is formed, which can initiate transcription. Mg(2+) serves as cofactor. Zn(2+) is required as a cofactor.

The enzyme catalyses RNA(n) + a ribonucleoside 5'-triphosphate = RNA(n+1) + diphosphate. Functionally, DNA-dependent RNA polymerase catalyzes the transcription of DNA into RNA using the four ribonucleoside triphosphates as substrates. The polypeptide is DNA-directed RNA polymerase subunit beta' (Xanthomonas axonopodis pv. citri (strain 306)).